A 470-amino-acid chain; its full sequence is MAGENHQWQGSILYNMLMSAKQTRAAPEAPETRLVDQCWGCSCGDEPGVGREGLLGGRNVALLYRCCFCGKDHPRQGSILYSMLTSAKQTYATPKAPEATLGPCWGCSCGSDPGVGRTGLPGGRPVALLYRCCFCGEDHPRQGSILYSLLTSAKQTHVAPAAPEARPGGAWWDRSYFAQKPGGREALPGGRATALLYRCCFCGEDHPQQGSTLYCMPTSTNQAQAAPEERPRAPWWDASSGALRPVALKNPQVVCEAASAGLLKTLRFVKYLPCFQVLPLDQQLVLVRNCWASLLMLELAQDRLQFETVEVSEPSMLQKILTTRRRETGGNEPLPVPTLQPHLAPPAEARKVPSASQVQAIKCFLSKCWSLNISTKEYAYLKGTVLFNRDVPGLQCVKYIQGLQWGTQQILSEHTRMTHQGPHDRFIELNSALFLLRFINANVIAELFFRPIIGTVSMDDMMLEMLCTKI.

3 tandem repeats follow at residues 1–67 (MAGE…YRCC), 68–133 (FCGK…YRCC), and 134–200 (FCGE…YRCC). Positions 1–253 (MAGENHQWQG…RPVALKNPQV (253 aa)) are 4 X 67 AA tandem repeats. 3 short sequence motifs (LXXLL motif) span residues 13 to 17 (LYNML), 80 to 84 (LYSML), and 146 to 150 (LYSLL). One copy of the 4; truncated repeat lies at 201-253 (FCGEDHPQQGSTLYCMPTSTNQAQAAPEERPRAPWWDASSGALRPVALKNPQV). The NR LBD domain maps to 215–469 (CMPTSTNQAQ…DMMLEMLCTK (255 aa)). The AF-2 motif signature appears at 461 to 466 (MMLEML).

This sequence belongs to the nuclear hormone receptor family. NR0 subfamily. In terms of assembly, homodimer. Interacts with NR5A1, NR5A2, NR0B2 and with COPS2. Interacts with ESRRB; represses ESRRB activity at the GATA6 promoter.

It localises to the nucleus. The protein localises to the cytoplasm. Nuclear receptor that lacks a DNA-binding domain and acts as a corepressor that inhibits the transcriptional activity of other nuclear receptors through heterodimeric interactions. Component of a cascade required for the development of the hypothalamic-pituitary-adrenal-gonadal axis. May also have a role in the development of the embryo and in the maintenance of embryonic stem cell pluripotency. The protein is Nuclear receptor subfamily 0 group B member 1 (NR0B1) of Pongo pygmaeus (Bornean orangutan).